A 182-amino-acid chain; its full sequence is ADP-ribosylation factor-like protein 3 (182 aa).

A lipid anchor (N-myristoyl glycine) is attached at Gly-2. Ser-5 bears the Phosphoserine mark. Residues 24–31 (GLDNAGKT), Thr-48, 67–71 (DIGGQ), Gly-70, 126–129 (NKQD), and 159–161 (SAL) each bind GTP. 2 residues coordinate Mg(2+): Thr-31 and Thr-48.

This sequence belongs to the small GTPase superfamily. Arf family. In terms of assembly, found in a complex with ARL3, RP2 and UNC119 (or UNC119B); RP2 induces hydrolysis of GTP ARL3 in the complex, leading to the release of UNC119 (or UNC119B). Interacts with RP2; interaction is direct and stimulated with the activated GTP-bound form of ARL3. Interacts with SYS1. Interacts with ARL2BP; the GTP-bound form interacts with ARL2BP. Microtubule-associated protein. Does not interact with TBCC. Interacts with RP2. Interacts with PDE6D; the interaction occurs specifically with the GTP-bound form of ARL3. Interacts with GGA1; the interaction recruits PKD1:PKD2 complex to trans-Golgi network and is required for ciliary targeting of PKD1:PKD2 complex. Interacts with DNAAF9.

It localises to the golgi apparatus membrane. It is found in the cytoplasm. Its subcellular location is the cytoskeleton. The protein localises to the spindle. The protein resides in the nucleus. It localises to the microtubule organizing center. It is found in the centrosome. Its subcellular location is the cell projection. The protein localises to the cilium. Its function is as follows. Small GTP-binding protein which cycles between an inactive GDP-bound and an active GTP-bound form, and the rate of cycling is regulated by guanine nucleotide exchange factors (GEF) and GTPase-activating proteins (GAP). Required for normal cytokinesis and cilia signaling. Required for targeting proteins to the cilium, including myristoylated NPHP3 and prenylated INPP5E. Targets NPHP3 to the ciliary membrane by releasing myristoylated NPHP3 from UNC119B cargo adapter into the cilium. Requires assistance from GTPase-activating proteins (GAPs) like RP2 and PDE6D, in order to cycle between inactive GDP-bound and active GTP-bound forms. Required for PKD1:PKD2 complex targeting from the trans-Golgi network to the cilium. The protein is ADP-ribosylation factor-like protein 3 of Mus musculus (Mouse).